Consider the following 536-residue polypeptide: Glutamyl-tRNA(Gln) amidotransferase subunit B, mitochondrial (536 aa).

The N-terminal 8 residues, 1-8 (MLRVHRLY), are a transit peptide targeting the mitochondrion.

Belongs to the GatB/GatE family. GatB subfamily. Subunit of the heterotrimeric GatFAB amidotransferase (AdT) complex, composed of A, B and F subunits.

It localises to the mitochondrion. It carries out the reaction L-glutamyl-tRNA(Gln) + L-glutamine + ATP + H2O = L-glutaminyl-tRNA(Gln) + L-glutamate + ADP + phosphate + H(+). Its function is as follows. Allows the formation of correctly charged Gln-tRNA(Gln) through the transamidation of misacylated Glu-tRNA(Gln) in the mitochondria. The reaction takes place in the presence of glutamine and ATP through an activated gamma-phospho-Glu-tRNA(Gln). In Eremothecium gossypii (strain ATCC 10895 / CBS 109.51 / FGSC 9923 / NRRL Y-1056) (Yeast), this protein is Glutamyl-tRNA(Gln) amidotransferase subunit B, mitochondrial.